A 429-amino-acid chain; its full sequence is Bifunctional protein GlmU (429 aa).

Positions 1–223 (MKISVLILAA…EQDFMGVNDK (223 aa)) are pyrophosphorylase. UDP-N-acetyl-alpha-D-glucosamine is bound by residues 8–11 (LAAG), Lys-22, Gln-74, and 81–82 (GT). Asp-102 lines the Mg(2+) pocket. 4 residues coordinate UDP-N-acetyl-alpha-D-glucosamine: Gly-135, Glu-149, Asn-164, and Asn-221. Mg(2+) is bound at residue Asn-221. The linker stretch occupies residues 224–244 (IELCLAQDLMQEAIKKEWMKQ). The segment at 245-429 (GVIFHMPATT…KDYFYTKFKK (185 aa)) is N-acetyltransferase. Positions 308 and 325 each coordinate UDP-N-acetyl-alpha-D-glucosamine. The Proton acceptor role is filled by His-336. UDP-N-acetyl-alpha-D-glucosamine is bound by residues Tyr-339 and Asn-350. Residues 359–360 (NY), Ser-378, Ala-396, and Arg-413 contribute to the acetyl-CoA site.

This sequence in the N-terminal section; belongs to the N-acetylglucosamine-1-phosphate uridyltransferase family. The protein in the C-terminal section; belongs to the transferase hexapeptide repeat family. As to quaternary structure, homotrimer. Mg(2+) is required as a cofactor.

Its subcellular location is the cytoplasm. The catalysed reaction is alpha-D-glucosamine 1-phosphate + acetyl-CoA = N-acetyl-alpha-D-glucosamine 1-phosphate + CoA + H(+). It carries out the reaction N-acetyl-alpha-D-glucosamine 1-phosphate + UTP + H(+) = UDP-N-acetyl-alpha-D-glucosamine + diphosphate. Its pathway is nucleotide-sugar biosynthesis; UDP-N-acetyl-alpha-D-glucosamine biosynthesis; N-acetyl-alpha-D-glucosamine 1-phosphate from alpha-D-glucosamine 6-phosphate (route II): step 2/2. It participates in nucleotide-sugar biosynthesis; UDP-N-acetyl-alpha-D-glucosamine biosynthesis; UDP-N-acetyl-alpha-D-glucosamine from N-acetyl-alpha-D-glucosamine 1-phosphate: step 1/1. It functions in the pathway bacterial outer membrane biogenesis; LPS lipid A biosynthesis. Functionally, catalyzes the last two sequential reactions in the de novo biosynthetic pathway for UDP-N-acetylglucosamine (UDP-GlcNAc). The C-terminal domain catalyzes the transfer of acetyl group from acetyl coenzyme A to glucosamine-1-phosphate (GlcN-1-P) to produce N-acetylglucosamine-1-phosphate (GlcNAc-1-P), which is converted into UDP-GlcNAc by the transfer of uridine 5-monophosphate (from uridine 5-triphosphate), a reaction catalyzed by the N-terminal domain. This is Bifunctional protein GlmU from Campylobacter lari (strain RM2100 / D67 / ATCC BAA-1060).